A 1213-amino-acid chain; its full sequence is uncharacterized protein (1213 aa).

Positions 289 to 390 constitute a PH domain; that stretch reads ATKRQGWLLR…WGSVINNARE (102 aa). The VASt domain maps to 776-945; it reads LDDIVFDRVY…EVNFLEKATR (170 aa). 2 helical membrane-spanning segments follow: residues 996-1016 and 1025-1045; these read LFLQ…FHIF and FLVI…FCFG.

The protein localises to the cytoplasm. Its subcellular location is the nucleus membrane. The protein resides in the cytoskeleton. It localises to the microtubule organizing center. It is found in the spindle pole body. This is an uncharacterized protein from Schizosaccharomyces pombe (strain 972 / ATCC 24843) (Fission yeast).